A 509-amino-acid polypeptide reads, in one-letter code: Maturase K (509 aa).

It belongs to the intron maturase 2 family. MatK subfamily.

It localises to the plastid. The protein localises to the chloroplast. In terms of biological role, usually encoded in the trnK tRNA gene intron. Probably assists in splicing its own and other chloroplast group II introns. The sequence is that of Maturase K from Jacaranda mimosifolia (Jacaranda).